The following is a 272-amino-acid chain: MRYIIILAVLFINSIHAKITSYKFESVNFDSKIEWTGDGLYNISLKNYGIKTWQTMYTNVPEGTYDISAFPKNDFVSFWVKFEQGDYKVEEYCTGLCVEVKIGPPTVTLTEYDDHINLYIEHPYATRGSKKIPIYKRGDMCDIYLLYTANFTFGDSEEPVTYDIDDYDCTSTGCSIDFATTEKVCVTAQGATEGFLEKITPWSSEVCLTPKKNVYTCAIRSKEDVPNFKDKMARVIKRKFNKQSQSYLTKFLGSTSNDVTTFLSMLNLTKYS.

Residues 1–13 (MRYIIILAVLFIN) form the signal peptide. N42, N150, and N267 each carry an N-linked (GlcNAc...) asparagine; by host glycan.

Belongs to the type II cytokine receptor family. In terms of assembly, homodimer. Interacts with host IFNG.

The protein resides in the secreted. Functionally, counteracts the antiviral effects of host IFN-gamma. Acts as a soluble IFN-gamma receptor and thus inhibits the interaction between host IFN-gamma and its receptor. This chain is Soluble interferon gamma receptor OPG193 (OPG193), found in Homo sapiens (Human).